A 209-amino-acid chain; its full sequence is UPF0174 protein HP_1587 (209 aa).

The protein belongs to the UPF0174 family.

The polypeptide is UPF0174 protein HP_1587 (Helicobacter pylori (strain ATCC 700392 / 26695) (Campylobacter pylori)).